The chain runs to 123 residues: Intracellular iron chaperone frataxin (123 aa).

In terms of assembly, homodimer, upon Fe(2+) binding. Interacts with the SufS/SufU complex. Interacts with CpfC. It depends on Fe(2+) as a cofactor.

It localises to the cytoplasm. Plays an essential role in iron intracellular trafficking to iron cofactor biogenesis systems including iron-sulfur cluster (Fe-S) or heme assembly. Promotes the biosynthesis of iron-sulfur clusters by delivering Fe to the complex composed of the cysteine desulfurase SufS and the zinc-dependent sulfurtransferase SufU. Also plays a critical role in coproporphyrin-dependent heme b biogenesis and thus provides an essential function for the bacterial global metabolism. This Bacillus subtilis (strain 168) protein is Intracellular iron chaperone frataxin (fra).